The following is an 809-amino-acid chain: Histone H2A deubiquitinase MYSM1 (809 aa).

Positions 33-78 constitute an SANT domain; the sequence is GYEPNWMFDHGQEIYGRSWTSISQFVQTRTPLQVKNYARHFFKTKV. Disordered regions lie at residues 113–140 and 320–378; these read PAQP…VTED and DATD…KETY. Basic and acidic residues-rich tracts occupy residues 335 to 345 and 363 to 378; these read TLDHPEDRSKP and TDGR…KETY. One can recognise an SWIRM domain in the interval 410–508; that stretch reads FKKPTEEVVL…FGCEEANRGE (99 aa). The MPN domain occupies 592–719; it reads VKIHATALVT…YSSTRISPLS (128 aa). Zn(2+)-binding residues include His-671, His-673, and Asp-684. The JAMM motif motif lies at 671–684; it reads HSHPTFAPNPSVRD.

The protein belongs to the peptidase M67A family. MYSM1 subfamily.

It localises to the nucleus. Its function is as follows. Metalloprotease that specifically deubiquitinates monoubiquitinated histone H2A, a specific tag for epigenetic transcriptional repression, thereby acting as a coactivator. Preferentially deubiquitinates monoubiquitinated H2A in hyperacetylated nucleosomes. Deubiquitination of histone H2A leads to facilitate the phosphorylation and dissociation of histone H1 from the nucleosome. Acts as a coactivator by participating in the initiation and elongation steps of androgen receptor (AR)-induced gene activation. This chain is Histone H2A deubiquitinase MYSM1 (MYSM1), found in Branchiostoma floridae (Florida lancelet).